Consider the following 351-residue polypeptide: Uroporphyrinogen decarboxylase (351 aa).

Residues 25–29, D74, Y151, S206, and H325 each bind substrate; that span reads RQAGR.

Belongs to the uroporphyrinogen decarboxylase family. As to quaternary structure, homodimer.

The protein resides in the cytoplasm. The enzyme catalyses uroporphyrinogen III + 4 H(+) = coproporphyrinogen III + 4 CO2. It functions in the pathway porphyrin-containing compound metabolism; protoporphyrin-IX biosynthesis; coproporphyrinogen-III from 5-aminolevulinate: step 4/4. Functionally, catalyzes the decarboxylation of four acetate groups of uroporphyrinogen-III to yield coproporphyrinogen-III. This is Uroporphyrinogen decarboxylase from Prosthecochloris aestuarii (strain DSM 271 / SK 413).